A 549-amino-acid chain; its full sequence is Lipase 3 (549 aa).

Positions 1–15 (MKLALALSLIASVAA) are cleaved as a signal peptide. The cysteines at positions 75 and 112 are disulfide-linked. S224 acts as the Acyl-ester intermediate in catalysis. C283 and C292 form a disulfide bridge. N329 carries an N-linked (GlcNAc...) asparagine glycan. Residue E356 is the Charge relay system of the active site. The N-linked (GlcNAc...) asparagine glycan is linked to N366. H464 acts as the Charge relay system in catalysis.

The protein belongs to the type-B carboxylesterase/lipase family. In terms of assembly, monomer and homodimer.

The catalysed reaction is a triacylglycerol + H2O = a diacylglycerol + a fatty acid + H(+). The chain is Lipase 3 (LIP3) from Diutina rugosa (Yeast).